The sequence spans 989 residues: Cellulose synthase A catalytic subunit 4 [UDP-forming] (989 aa).

Residues 1 to 184 (MMESGVPPCA…SRIIPISKNK (184 aa)) are Cytoplasmic-facing. The Zn(2+) site is built by Cys-9, Cys-12, Cys-20, Cys-23, Cys-28, Cys-31, Cys-43, and Cys-46. The segment at 9–47 (CAACGDDAHAACRACSYALCKACLDEDAAEGRTTCARCG) adopts an RING-type; degenerate zinc-finger fold. Positions 138–149 (KKEKKASAKKAA) are enriched in basic residues. Positions 138–158 (KKEKKASAKKAAAKAQAPPVE) are disordered. Residues 185-205 (LTPYRAVIIMRLVVLGLFFHY) form a helical membrane-spanning segment. Over 206 to 213 (RITNPVYS) the chain is Extracellular. Residues 214-234 (AFGLWMTSVICEIWFGFSWIL) traverse the membrane as a helical segment. Residues 235-772 (DQFPKWCPIN…INTIVYPFTS (538 aa)) are Cytoplasmic-facing. Residues Ser-272, Lys-278, Glu-279, and Asp-308 each coordinate UDP-alpha-D-glucose. The active site involves Asp-308. Residues 362 to 389 (VKERRAMKRDYEEYKVRINALVAKAQKT) adopt a coiled-coil conformation. UDP-alpha-D-glucose is bound at residue Lys-449. Positions 450 and 474 each coordinate Mn(2+). Asp-688 is an active-site residue. Residues 773–793 (LPLIAYCCLPAICLLTGKFII) form a helical membrane-spanning segment. Over 794–798 (PTLSN) the chain is Extracellular. The helical transmembrane segment at 799 to 819 (AATIWFLGLFISIIVTSVLEL) threads the bilayer. Over 820 to 835 (RWSGIGIEDWWRNEQF) the chain is Cytoplasmic. The chain crosses the membrane as a helical span at residues 836–856 (WVIGGVSAHLFAVFQGILKMI). The Extracellular portion of the chain corresponds to 857 to 884 (AGLDTNFTVTAKATDDTEFGELYVFKWT). Asn-862 is a glycosylation site (N-linked (GlcNAc...) asparagine). Residues 885-905 (TVLIPPTSILVLNLVGVVAGF) traverse the membrane as a helical segment. Residues 906-916 (SDALNSGYESW) are Cytoplasmic-facing. Residues 917-937 (GPLFGKVFFAMWVIMHLYPFL) form a helical membrane-spanning segment. Residues 938–946 (KGLMGRQNR) are Extracellular-facing. A helical transmembrane segment spans residues 947–967 (TPTIVVLWSVLLASVFSLLWV). At 968–989 (KIDPFIGSSETTTTNSCANFDC) the chain is on the cytoplasmic side.

Belongs to the glycosyltransferase 2 family. Plant cellulose synthase subfamily. Requires Mn(2+) as cofactor. Zn(2+) is required as a cofactor.

It localises to the cell membrane. It catalyses the reaction [(1-&gt;4)-beta-D-glucosyl](n) + UDP-alpha-D-glucose = [(1-&gt;4)-beta-D-glucosyl](n+1) + UDP + H(+). It participates in glycan metabolism; plant cellulose biosynthesis. Catalytic subunit of cellulose synthase terminal complexes ('rosettes'), required for beta-1,4-glucan microfibril crystallization, a major mechanism of the cell wall formation. Involved in the secondary cell wall formation. The polypeptide is Cellulose synthase A catalytic subunit 4 [UDP-forming] (CESA4) (Oryza sativa subsp. japonica (Rice)).